Here is a 410-residue protein sequence, read N- to C-terminus: Sprouty-related, EVH1 domain-containing protein 3 (410 aa).

In terms of domain architecture, WH1 spans 1–113 (MVRVRAVVMA…KSLLAALAAL (113 aa)). Residues 117–210 (SLTPSSSSSS…PEPSEPLAGA (94 aa)) form a disordered region. 2 stretches are compositionally biased toward low complexity: residues 120-130 (PSSSSSSSSPS) and 147-165 (DSSS…AAAP). Positions 195–244 (LPFTGIPEPSEPLAGAGGLGWGGRGYEDYRRSGPPAPLALSTCVVRFAKT) constitute a KBD domain. Asymmetric dimethylarginine is present on R240. At R248 the chain carries Omega-N-methylarginine. A disordered region spans residues 258–288 (LPAPLTEAAPPAPPARPPPGPGPSSAPAKAS). Over residues 267–281 (PPAPPARPPPGPGPS) the composition is skewed to pro residues. In terms of domain architecture, SPR spans 296–407 (RCVHCRALFR…CAGCGGRHEE (112 aa)).

Interacts with palmitoyltransferase ZDHHC17/HIP14; the interaction leads to palmitoylation of SPRED3. Phosphorylated on tyrosine. In terms of processing, palmitoylated by ZDHHC17/HIP14. Post-translationally, ubiquitinated.

It localises to the cell membrane. In terms of biological role, tyrosine kinase substrate that inhibits growth-factor-mediated activation of MAP kinase. Inhibits fibroblast growth factor (FGF)-induced retinal lens fiber differentiation, probably by inhibiting FGF-mediated phosphorylation of ERK1/2. Inhibits TGFB-induced epithelial-to-mesenchymal transition in lens epithelial cells. This Homo sapiens (Human) protein is Sprouty-related, EVH1 domain-containing protein 3 (SPRED3).